The following is a 427-amino-acid chain: 3-phosphoshikimate 1-carboxyvinyltransferase (427 aa).

Residues Lys-20, Ser-21, and Arg-25 each contribute to the 3-phosphoshikimate site. Lys-20 serves as a coordination point for phosphoenolpyruvate. 2 residues coordinate phosphoenolpyruvate: Gly-92 and Arg-120. Ser-166, Gln-168, Asp-312, and Lys-339 together coordinate 3-phosphoshikimate. Residue Gln-168 coordinates phosphoenolpyruvate. Asp-312 acts as the Proton acceptor in catalysis. Arg-343 and Arg-385 together coordinate phosphoenolpyruvate.

This sequence belongs to the EPSP synthase family. In terms of assembly, monomer.

It is found in the cytoplasm. It catalyses the reaction 3-phosphoshikimate + phosphoenolpyruvate = 5-O-(1-carboxyvinyl)-3-phosphoshikimate + phosphate. The protein operates within metabolic intermediate biosynthesis; chorismate biosynthesis; chorismate from D-erythrose 4-phosphate and phosphoenolpyruvate: step 6/7. Catalyzes the transfer of the enolpyruvyl moiety of phosphoenolpyruvate (PEP) to the 5-hydroxyl of shikimate-3-phosphate (S3P) to produce enolpyruvyl shikimate-3-phosphate and inorganic phosphate. The polypeptide is 3-phosphoshikimate 1-carboxyvinyltransferase (Streptococcus thermophilus (strain ATCC BAA-491 / LMD-9)).